The following is a 784-amino-acid chain: DNA repair and recombination protein RAD54-like (784 aa).

Residues 1 to 50 (MRRSLAPSQRGPLRPESRHSFTPPLLKKNKRSCQQELEREQELDRKRQSA) are disordered. Residues 2–9 (RRSLAPSQ) are required for chromatin remodeling, strand pairing activities and coupling of ATPase activity. Residue Ser20 is modified to Phosphoserine. At Thr22 the chain carries Phosphothreonine. A compositionally biased stretch (basic and acidic residues) spans 36–47 (ELEREQELDRKR). The 175-residue stretch at 172 to 346 (EGKRGNFNGC…YSLVNFVNPE (175 aa)) folds into the Helicase ATP-binding domain. An ATP-binding site is contributed by 185–192 (DEMGLGKT). The DEGH box motif lies at 297–300 (DEGH). Residues 503 to 660 (LLDFMLAAIR…NNESAEKHFT (158 aa)) form the Helicase C-terminal domain. Residues 747–756 (VASAEEAASE) show a composition bias toward low complexity. Residues 747–784 (VASAEEAASEQPEEKPDRRKRPSTPLSDDSADEDFLGF) form a disordered region. The span at 775 to 784 (DSADEDFLGF) shows a compositional bias: acidic residues.

Belongs to the SNF2/RAD54 helicase family. Interacts (via N-terminus) with spn-A/Rad51.

It is found in the nucleus. Involved in mitotic DNA repair and meiotic recombination. Functions in the recombinational DNA repair pathway. Essential for interhomolog gene conversion (GC), but may have a less important role in intersister GC than spn-A/Rad51. In the presence of DNA, spn-A/Rad51 enhances the ATPase activity of okr/Rad54. The chain is DNA repair and recombination protein RAD54-like from Drosophila erecta (Fruit fly).